Reading from the N-terminus, the 779-residue chain is Lon protease (779 aa).

Residues Leu-10–Arg-203 enclose the Lon N-terminal domain. Gly-355 to Thr-362 is an ATP binding site. The Lon proteolytic domain maps to Lys-591–Lys-772. Residues Ser-678 and Lys-721 contribute to the active site.

Belongs to the peptidase S16 family. As to quaternary structure, homohexamer. Organized in a ring with a central cavity.

Its subcellular location is the cytoplasm. The enzyme catalyses Hydrolysis of proteins in presence of ATP.. Functionally, ATP-dependent serine protease that mediates the selective degradation of mutant and abnormal proteins as well as certain short-lived regulatory proteins. Required for cellular homeostasis and for survival from DNA damage and developmental changes induced by stress. Degrades polypeptides processively to yield small peptide fragments that are 5 to 10 amino acids long. Binds to DNA in a double-stranded, site-specific manner. The protein is Lon protease of Brevibacillus choshinensis.